Reading from the N-terminus, the 301-residue chain is Probable alpha-L-glutamate ligase (301 aa).

The 184-residue stretch at 104-287 folds into the ATP-grasp domain; that stretch reads MQLLSRKGIG…VAGLIVDFIE (184 aa). ATP-binding positions include lysine 141, 178 to 179, aspartate 187, and 211 to 213; these read EF and RSN. Aspartate 248, glutamate 260, and asparagine 262 together coordinate Mg(2+). Positions 248, 260, and 262 each coordinate Mn(2+).

Belongs to the RimK family. Mg(2+) serves as cofactor. The cofactor is Mn(2+).

This Aliivibrio salmonicida (strain LFI1238) (Vibrio salmonicida (strain LFI1238)) protein is Probable alpha-L-glutamate ligase.